Consider the following 392-residue polypeptide: Succinate--CoA ligase [ADP-forming] subunit beta (392 aa).

One can recognise an ATP-grasp domain in the interval 9–236; that stretch reads RDLFERHGLP…QAAVDPLEQA (228 aa). Residues Lys45, 52 to 54, Ala94, and Glu99 each bind ATP; that span reads GRG. Positions 191 and 205 each coordinate Mg(2+). Substrate is bound by residues Asn256 and 318–320; that span reads GIT.

The protein belongs to the succinate/malate CoA ligase beta subunit family. As to quaternary structure, heterotetramer of two alpha and two beta subunits. Mg(2+) is required as a cofactor.

The enzyme catalyses succinate + ATP + CoA = succinyl-CoA + ADP + phosphate. It catalyses the reaction GTP + succinate + CoA = succinyl-CoA + GDP + phosphate. It functions in the pathway carbohydrate metabolism; tricarboxylic acid cycle; succinate from succinyl-CoA (ligase route): step 1/1. In terms of biological role, succinyl-CoA synthetase functions in the citric acid cycle (TCA), coupling the hydrolysis of succinyl-CoA to the synthesis of either ATP or GTP and thus represents the only step of substrate-level phosphorylation in the TCA. The beta subunit provides nucleotide specificity of the enzyme and binds the substrate succinate, while the binding sites for coenzyme A and phosphate are found in the alpha subunit. The polypeptide is Succinate--CoA ligase [ADP-forming] subunit beta (Salinispora tropica (strain ATCC BAA-916 / DSM 44818 / JCM 13857 / NBRC 105044 / CNB-440)).